The following is a 164-amino-acid chain: Transcription elongation factor GreA (164 aa).

Residues 11 to 76 (EESYDRLKAE…LQELLNNAKV (66 aa)) are a coiled coil.

Belongs to the GreA/GreB family.

In terms of biological role, necessary for efficient RNA polymerase transcription elongation past template-encoded arresting sites. The arresting sites in DNA have the property of trapping a certain fraction of elongating RNA polymerases that pass through, resulting in locked ternary complexes. Cleavage of the nascent transcript by cleavage factors such as GreA or GreB allows the resumption of elongation from the new 3'terminus. GreA releases sequences of 2 to 3 nucleotides. The sequence is that of Transcription elongation factor GreA from Mycolicibacterium vanbaalenii (strain DSM 7251 / JCM 13017 / BCRC 16820 / KCTC 9966 / NRRL B-24157 / PYR-1) (Mycobacterium vanbaalenii).